The primary structure comprises 125 residues: Aldolase FrzH (125 aa).

The catalysed reaction is (2S)-3-(4-methoxyphenyl)-2-[(3S)-3-(methylamino)-8-oxo-1-azaspiro[4.5]decan-1-yl]propanal = (1S,3S,6S,7S,8R)-7-hydroxy-6-[(4-methoxyphenyl)methyl]-3-(methylamino)-5-azatricyclo[6.3.1.0(1,5)]dodecan-9-one. The protein operates within secondary metabolite biosynthesis. In terms of biological role, aldolase; part of the gene cluster that mediates the biosynthesis of the alkaloid (-)-FR901483, a potent immunosuppressant that shows efficacy in animal models and a probable inhibitor of purine nucleotide biosynthesis by targeting phosphoribosylpyrophosphate amidotransferase (PPAT). Within the pathway, FrzH is a new kind of aldolase with no similarities to known aldolases, and which catalyzes the intramolecular aldol condensation via formation of a C9-C3' bond to yield an aza-tricyclic product. The biosynthesis of (-)-FR901483 starts with the condensation of two L-tyrosines to yield (S,S)-dityrosyl-piperazine. This process occurs in 3 steps with the non-canonical nonribosomal peptide synthetase FrzA catalyzing the reduction of L-tyrosine into L-tyrosinal, the spontaneous condensation of 2 L-tyrosinal units, and the subsequent reduction by the NmrA-like family domain-containing oxidoreductase FrzB. The cytochrome P450 monooxygenase FrzC then performs coupling between N10 and C1' to morph the piperazine into a 1,4-diazabicyclo[3.2.1]octane spiro-fused to a 2,5-cyclohexadienone. The dienone portion is further reduced to cyclohexanone by the flavin-dependent reductase FrzD. The methyltranserases (MTs) FrzE and FrzF are then involved in the methylation at the C10' amine and the C4 phenolic oxygen, respectively. The order of the two MTs appear to be interchangeable. Cleavage of the C9-N10' bond by the dioxygenase FrzG then leads to formation of a conjugated iminium. In addition to the oxidation of C9, an additional dehydrogenation between C7 and C8 can occur to give a likely shunt product. The next biosynthetic step is the intramolecular aldol condensation catalyzed by the newly identified aldolase FrzH to yield an aza-tricyclic product with the formation of a C9-C3' bond. The short-chain dehydrogenase/reductase FrzI then produces dephospho-(-)-FR901483 that is phosphorylated at C4'-OH into (-)-FR901483 by the phosphotransferase FrzJ. The sequence is that of Aldolase FrzH from Cladobotryum sp.